The sequence spans 92 residues: Small ribosomal subunit protein uS19 (92 aa).

Residues 73–92 (EFSPTRSFRGHAGAKNKGKK) are disordered. Residues 80–92 (FRGHAGAKNKGKK) are compositionally biased toward basic residues.

It belongs to the universal ribosomal protein uS19 family.

Functionally, protein S19 forms a complex with S13 that binds strongly to the 16S ribosomal RNA. In Flavobacterium psychrophilum (strain ATCC 49511 / DSM 21280 / CIP 103535 / JIP02/86), this protein is Small ribosomal subunit protein uS19.